A 625-amino-acid chain; its full sequence is DNA-directed RNA polymerase subunit gamma (625 aa).

Positions 71, 73, 86, and 89 each coordinate Zn(2+). Asp-467, Asp-469, and Asp-471 together coordinate Mg(2+).

It belongs to the RNA polymerase beta' chain family. RpoC1 subfamily. In terms of assembly, in cyanobacteria the RNAP catalytic core is composed of 2 alpha, 1 beta, 1 beta', 1 gamma and 1 omega subunit. When a sigma factor is associated with the core the holoenzyme is formed, which can initiate transcription. The cofactor is Mg(2+). Requires Zn(2+) as cofactor.

The catalysed reaction is RNA(n) + a ribonucleoside 5'-triphosphate = RNA(n+1) + diphosphate. DNA-dependent RNA polymerase catalyzes the transcription of DNA into RNA using the four ribonucleoside triphosphates as substrates. This chain is DNA-directed RNA polymerase subunit gamma, found in Trichormus variabilis (strain ATCC 29413 / PCC 7937) (Anabaena variabilis).